The following is an 866-amino-acid chain: Thiamine diphosphate dependent-3-acetyloctanal synthase PigD (866 aa).

Residues 826 to 866 form a disordered region; sequence KGWQRDPSDREALQERKDWAARQPESTSTSFDQGQNKEAIS. The span at 828–845 shows a compositional bias: basic and acidic residues; it reads WQRDPSDREALQERKDWA. The span at 849–866 shows a compositional bias: polar residues; it reads PESTSTSFDQGQNKEAIS.

It belongs to the TPP enzyme family. The cofactor is thiamine diphosphate.

It carries out the reaction (2E)-octenal + pyruvate + H(+) = (S)-3-acetyloctanal + CO2. Its pathway is antibiotic biosynthesis; prodigiosin biosynthesis. Functionally, involved in the biosynthesis of 2-methyl-3-n-amyl-pyrrole (MAP), one of the terminal products involved in the biosynthesis of the red antibiotic prodigiosin (Pig). Catalyzes the decarboxylation of pyruvate, followed by the modification of the resulting two-carbon fragment acetaldehyde at the C3 position of the 2-octenal (1,2-addition of acetaldehyde) giving 3-acetyloctanal. The sequence is that of Thiamine diphosphate dependent-3-acetyloctanal synthase PigD from Serratia sp. (strain ATCC 39006) (Prodigiosinella confusarubida).